The sequence spans 308 residues: tRNA dimethylallyltransferase (308 aa).

10–17 (GPTASGKT) lines the ATP pocket. 12–17 (TASGKT) provides a ligand contact to substrate. 2 interaction with substrate tRNA regions span residues 35–38 (DSSL) and 159–163 (QRIFR).

It belongs to the IPP transferase family. In terms of assembly, monomer. It depends on Mg(2+) as a cofactor.

The enzyme catalyses adenosine(37) in tRNA + dimethylallyl diphosphate = N(6)-dimethylallyladenosine(37) in tRNA + diphosphate. Functionally, catalyzes the transfer of a dimethylallyl group onto the adenine at position 37 in tRNAs that read codons beginning with uridine, leading to the formation of N6-(dimethylallyl)adenosine (i(6)A). The sequence is that of tRNA dimethylallyltransferase from Francisella tularensis subsp. novicida (strain U112).